The following is a 159-amino-acid chain: Eukaryotic translation initiation factor 5A-4 (159 aa).

A compositionally biased stretch (basic and acidic residues) spans 1-12 (MSDEEHQFESKA). The interval 1-21 (MSDEEHQFESKADAGASKTYP) is disordered. Lys-52 carries the post-translational modification Hypusine.

Belongs to the eIF-5A family. Lys-52 undergoes hypusination, a unique post-translational modification that consists in the addition of a butylamino group from spermidine to lysine side chain, leading to the formation of the unusual amino acid hypusine. eIF-5As are the only known proteins to undergo this modification, which is essential for their function.

Functionally, translation factor that promotes translation elongation and termination, particularly upon ribosome stalling at specific amino acid sequence contexts. Binds between the exit (E) and peptidyl (P) site of the ribosome and promotes rescue of stalled ribosome: specifically required for efficient translation of polyproline-containing peptides as well as other motifs that stall the ribosome. Acts as a ribosome quality control (RQC) cofactor by joining the RQC complex to facilitate peptidyl transfer during CAT tailing step. The polypeptide is Eukaryotic translation initiation factor 5A-4 (EIF5A4) (Solanum tuberosum (Potato)).